Here is a 46-residue protein sequence, read N- to C-terminus: Daisho2 (46 aa).

The first 22 residues, 1-22 (MNCLKICGFFFALIAALATAEA), serve as a signal peptide directing secretion.

As to expression, hemolymph (at protein level).

It is found in the secreted. Peptide which plays a role in the humoral immune response to a subset of filamentous fungi, including F.oxysporum and F.verticillioides. This Drosophila melanogaster (Fruit fly) protein is Daisho2.